The following is a 309-amino-acid chain: tRNA dimethylallyltransferase (309 aa).

An ATP-binding site is contributed by 15 to 22 (GPTASGKS). 17–22 (TASGKS) contributes to the substrate binding site. The tract at residues 40–43 (DSRQ) is interaction with substrate tRNA.

This sequence belongs to the IPP transferase family. As to quaternary structure, monomer. Mg(2+) is required as a cofactor.

The enzyme catalyses adenosine(37) in tRNA + dimethylallyl diphosphate = N(6)-dimethylallyladenosine(37) in tRNA + diphosphate. Its function is as follows. Catalyzes the transfer of a dimethylallyl group onto the adenine at position 37 in tRNAs that read codons beginning with uridine, leading to the formation of N6-(dimethylallyl)adenosine (i(6)A). The chain is tRNA dimethylallyltransferase from Chlorobium phaeovibrioides (strain DSM 265 / 1930) (Prosthecochloris vibrioformis (strain DSM 265)).